A 105-amino-acid polypeptide reads, in one-letter code: Urease subunit beta (105 aa).

This sequence belongs to the urease beta subunit family. Heterotrimer of UreA (gamma), UreB (beta) and UreC (alpha) subunits. Three heterotrimers associate to form the active enzyme.

It localises to the cytoplasm. It carries out the reaction urea + 2 H2O + H(+) = hydrogencarbonate + 2 NH4(+). Its pathway is nitrogen metabolism; urea degradation; CO(2) and NH(3) from urea (urease route): step 1/1. This chain is Urease subunit beta, found in Mycobacterium sp. (strain JLS).